Consider the following 840-residue polypeptide: Phosphatidylglycerol lysyltransferase (840 aa).

Topologically, residues 1–8 (MTQELKSK) are cytoplasmic. Residues 9 to 29 (LLSFFKFIFATALFIFVIFTL) traverse the membrane as a helical segment. The Extracellular segment spans residues 30–52 (YRELSHINFKETFIQFGKINRLW). Residues 53 to 73 (LVLLFAGGGLSLILLSLYDII) traverse the membrane as a helical segment. Residues 74 to 89 (LVKALKLKMPLIRVFR) are Cytoplasmic-facing. The helical transmembrane segment at 90-110 (VSYIINALNSIIGFGGFIGAG) threads the bilayer. The Extracellular segment spans residues 111–129 (VRAFVYKNYTNDTKKLVQY). The helical transmembrane segment at 130–150 (ISIILVSMLTGLSLLSILVVL) threads the bilayer. At 151–161 (RIFNASHMIDE) the chain is on the cytoplasmic side. A helical membrane pass occupies residues 162–182 (ISWVRWILYIVALFLPIFIFY). Topologically, residues 183–200 (TVARPVDRNNRYMGVYCT) are extracellular. The helical transmembrane segment at 201 to 221 (VVSCVEWMAAATVLYFAALIV) threads the bilayer. Residues 222–229 (DIHISFMT) lie on the Cytoplasmic side of the membrane. The chain crosses the membrane as a helical span at residues 230–250 (FVGIFVIAALSGLVSFIPGGF). The Extracellular portion of the chain corresponds to 251–270 (GAFDLVVLLGLKSLGISEEK). A helical transmembrane segment spans residues 271-291 (ILLALVLYRFAYYFVPVMIAL). Topologically, residues 292–337 (ILSSFEFGNTAKKYLDNSKYFIPVKDFTSFLRSYQKDILAKVPSFS) are cytoplasmic. The chain crosses the membrane as a helical span at residues 338–358 (LAILIFLTSIIFFINNLTIVY). Over 359-366 (DGLYDGNH) the chain is Extracellular. Residues 367–387 (FAYYIALAVQTSACLLLILNV) form a helical membrane-spanning segment. Over 388–392 (RGIYK) the chain is Cytoplasmic. The chain crosses the membrane as a helical span at residues 393 to 413 (GSRRAIIYAFISIILIASATI). The Extracellular segment spans residues 414–415 (YT). Residues 416-436 (YASFLLLSWLIIIFVLLILAY) form a helical membrane-spanning segment. At 437–450 (QRAQVLKRPLRFKK) the chain is on the cytoplasmic side. A helical transmembrane segment spans residues 451 to 471 (LAVMLLLSIFILYLNHILISG). The Extracellular segment spans residues 472 to 489 (TLYALDVYHIEIDTSLLR). Residues 490 to 510 (YYFWMTIVIIMLLVGVIAWLF) form a helical membrane-spanning segment. The Cytoplasmic segment spans residues 511–840 (DYKYKCPHHS…LKVMRVIRHK (330 aa)).

It belongs to the LPG synthase family.

It localises to the cell membrane. The catalysed reaction is L-lysyl-tRNA(Lys) + a 1,2-diacyl-sn-glycero-3-phospho-(1'-sn-glycerol) = a 1,2-diacyl-sn-glycero-3-phospho-1'-(3'-O-L-lysyl)-sn-glycerol + tRNA(Lys). Functionally, catalyzes the transfer of a lysyl group from L-lysyl-tRNA(Lys) to membrane-bound phosphatidylglycerol (PG), which produces lysylphosphatidylglycerol (LPG), a major component of the bacterial membrane with a positive net charge. LPG synthesis contributes to bacterial virulence as it is involved in the resistance mechanism against cationic antimicrobial peptides (CAMP) produces by the host's immune system (defensins, cathelicidins) and by the competing microorganisms (bacteriocins). In fact, the modification of anionic phosphatidylglycerol with positively charged L-lysine results in repulsion of the peptides. This is Phosphatidylglycerol lysyltransferase (mprF) from Staphylococcus epidermidis (strain ATCC 12228 / FDA PCI 1200).